Consider the following 158-residue polypeptide: NADPH-dependent 7-cyano-7-deazaguanine reductase (158 aa).

Cys56 serves as the catalytic Thioimide intermediate. The Proton donor role is filled by Asp63. Residues 78 to 80 (VES) and 97 to 98 (HE) contribute to the substrate site.

Belongs to the GTP cyclohydrolase I family. QueF type 1 subfamily.

It is found in the cytoplasm. The catalysed reaction is 7-aminomethyl-7-carbaguanine + 2 NADP(+) = 7-cyano-7-deazaguanine + 2 NADPH + 3 H(+). It functions in the pathway tRNA modification; tRNA-queuosine biosynthesis. Functionally, catalyzes the NADPH-dependent reduction of 7-cyano-7-deazaguanine (preQ0) to 7-aminomethyl-7-deazaguanine (preQ1). This is NADPH-dependent 7-cyano-7-deazaguanine reductase from Rhodopseudomonas palustris (strain HaA2).